The sequence spans 313 residues: Putative adhesin P1-like protein MPN_202 (313 aa).

The span at 1–16 (MGSQNQGSTTTTSAGN) shows a compositional bias: low complexity. Residues 1 to 44 (MGSQNQGSTTTTSAGNPDSLVTDKVDQKGQVQTSGQNLSDTNYT) form a disordered region. Positions 29 to 44 (GQVQTSGQNLSDTNYT) are enriched in polar residues.

This sequence belongs to the adhesin P1 family.

The sequence is that of Putative adhesin P1-like protein MPN_202 from Mycoplasma pneumoniae (strain ATCC 29342 / M129 / Subtype 1) (Mycoplasmoides pneumoniae).